Consider the following 293-residue polypeptide: ATP synthase gamma chain (293 aa).

Belongs to the ATPase gamma chain family. In terms of assembly, F-type ATPases have 2 components, CF(1) - the catalytic core - and CF(0) - the membrane proton channel. CF(1) has five subunits: alpha(3), beta(3), gamma(1), delta(1), epsilon(1). CF(0) has three main subunits: a, b and c.

It is found in the cell inner membrane. Its function is as follows. Produces ATP from ADP in the presence of a proton gradient across the membrane. The gamma chain is believed to be important in regulating ATPase activity and the flow of protons through the CF(0) complex. The sequence is that of ATP synthase gamma chain from Nitratidesulfovibrio vulgaris (strain DSM 19637 / Miyazaki F) (Desulfovibrio vulgaris).